We begin with the raw amino-acid sequence, 287 residues long: Nucleotide-binding protein Gbem_0872 (287 aa).

G8–S15 lines the ATP pocket. D59–S62 is a GTP binding site.

The protein belongs to the RapZ-like family.

Its function is as follows. Displays ATPase and GTPase activities. The polypeptide is Nucleotide-binding protein Gbem_0872 (Citrifermentans bemidjiense (strain ATCC BAA-1014 / DSM 16622 / JCM 12645 / Bem) (Geobacter bemidjiensis)).